The chain runs to 316 residues: Very long chain fatty acid elongase 6 (316 aa).

A glycan (N-linked (GlcNAc...) asparagine) is linked at Asn11. 6 helical membrane passes run Trp30 to Phe50, Leu64 to Ala84, Phe117 to Val137, Pro142 to Tyr162, Ser167 to Leu189, and Met202 to Ala222. Residue Asn242 is glycosylated (N-linked (GlcNAc...) asparagine). The chain crosses the membrane as a helical span at residues Ile245–Ala265.

This sequence belongs to the ELO family. ELOVL6 subfamily. Detected in the CNS (central nervous system) of third larval instar (at protein level). Expressed in cyst progenitor cells (at protein level). In the adult fly, expressed in several tissues including, sperm, follicular epithelium, nurse cells and cyst cells.

Its subcellular location is the mitochondrion outer membrane. It localises to the endoplasmic reticulum membrane. It catalyses the reaction a very-long-chain acyl-CoA + malonyl-CoA + H(+) = a very-long-chain 3-oxoacyl-CoA + CO2 + CoA. The catalysed reaction is hexadecanoyl-CoA + malonyl-CoA + H(+) = 3-oxooctadecanoyl-CoA + CO2 + CoA. The protein operates within lipid metabolism; fatty acid biosynthesis. In terms of biological role, catalyzes the first and rate-limiting reaction of the four reactions that constitute the long-chain fatty acids elongation cycle. This process allows the addition of 2 carbons to the chain of long- and very long-chain fatty acids (VLCFAs) per cycle. Condensing enzyme that elongates fatty acids with 12, 14 and 16 carbons with higher activity toward C16:0 acyl-CoAs. Catalyzes the synthesis of unsaturated C16 long chain fatty acids and, to a lesser extent, C18:0 and those with low desaturation degree. May participate in the production of saturated and monounsaturated VLCFAs of different chain lengths that are involved in multiple biological processes as precursors of membrane lipids and lipid mediators. The protein is Very long chain fatty acid elongase 6 of Drosophila melanogaster (Fruit fly).